The chain runs to 86 residues: Large ribosomal subunit protein bL31B (86 aa).

The protein belongs to the bacterial ribosomal protein bL31 family. Type B subfamily. In terms of assembly, part of the 50S ribosomal subunit.

This chain is Large ribosomal subunit protein bL31B, found in Streptococcus pyogenes serotype M1.